We begin with the raw amino-acid sequence, 79 residues long: Translational regulator CsrA (79 aa).

Belongs to the CsrA/RsmA family. As to quaternary structure, homodimer; the beta-strands of each monomer intercalate to form a hydrophobic core, while the alpha-helices form wings that extend away from the core.

It is found in the cytoplasm. Functionally, a translational regulator that binds mRNA to regulate translation initiation and/or mRNA stability. Usually binds in the 5'-UTR at or near the Shine-Dalgarno sequence preventing ribosome-binding, thus repressing translation. Its main target seems to be the major flagellin gene, while its function is anatagonized by FliW. This is Translational regulator CsrA from Shouchella clausii (strain KSM-K16) (Alkalihalobacillus clausii).